Here is a 152-residue protein sequence, read N- to C-terminus: Clitocypin-4/-3 (152 aa).

It belongs to the protease inhibitor I48 family. In terms of assembly, homodimer.

In terms of biological role, binds and inhibits cysteine proteinases. Inhibits most strongly papain and cathepsin L, more weakly bromelain and cathepsin B while it is completely ineffective against cathepsin H. In Clitocybe nebularis (Clouded agaric), this protein is Clitocypin-4/-3 (clt4).